Here is a 339-residue protein sequence, read N- to C-terminus: UDP-galactose transporter homolog 1 (339 aa).

The next 9 membrane-spanning stretches (helical) occupy residues 5–25, 43–63, 91–111, 138–158, 171–191, 208–228, 246–268, 273–295, and 301–321; these read ILKHVFAVGGIYCSFLTWGLL, VPYIVALVQATIAMICGLIYI, AISAPLAAYSLSYVDFLTYML, LVVLLVTVGITIFTLDGHKPS, SSLIGFVLLGSSLFLDGLTNA, HLMFALNFFLIVWNVIYMVLV, ISRYLLAYACCGAIGQCFIFYTL, SLVLVMVTVTRKMFSMILSIIVY, and LWQWVGIVIVFTGVVCESMGK.

The protein belongs to the nucleotide-sugar transporter family. SLC35B subfamily.

It localises to the endoplasmic reticulum membrane. In terms of biological role, may be involved in specific transport of UDP-Gal from the cytosol to the Golgi lumen. Involved in the maintenance of optimal conditions for the folding of secretory pathway proteins in the endoplasmic reticulum. The chain is UDP-galactose transporter homolog 1 (HUT1) from Kluyveromyces lactis (strain ATCC 8585 / CBS 2359 / DSM 70799 / NBRC 1267 / NRRL Y-1140 / WM37) (Yeast).